The sequence spans 248 residues: Cell division protein ZapD (248 aa).

It belongs to the ZapD family. In terms of assembly, interacts with FtsZ.

The protein resides in the cytoplasm. In terms of biological role, cell division factor that enhances FtsZ-ring assembly. Directly interacts with FtsZ and promotes bundling of FtsZ protofilaments, with a reduction in FtsZ GTPase activity. The polypeptide is Cell division protein ZapD (Aliivibrio salmonicida (strain LFI1238) (Vibrio salmonicida (strain LFI1238))).